A 156-amino-acid polypeptide reads, in one-letter code: Cell division protein SepF (156 aa).

Positions 17–44 (PETADYYEDQQPAQQAPAPVPTPAPTRS) are disordered.

It belongs to the SepF family. In terms of assembly, homodimer. Interacts with FtsZ.

The protein resides in the cytoplasm. Cell division protein that is part of the divisome complex and is recruited early to the Z-ring. Probably stimulates Z-ring formation, perhaps through the cross-linking of FtsZ protofilaments. Its function overlaps with FtsA. In Limosilactobacillus fermentum (strain NBRC 3956 / LMG 18251) (Lactobacillus fermentum), this protein is Cell division protein SepF.